A 132-amino-acid polypeptide reads, in one-letter code: Agouti-signaling protein (132 aa).

The first 22 residues, 1–22 (MDVTRLLLATLLVFLCFFTACS), serve as a signal peptide directing secretion. A glycan (N-linked (GlcNAc...) asparagine) is linked at N39. The segment at 61-87 (QISRKEAEKKRSSKKEASMKKVARPRT) is disordered. Over residues 63-79 (SRKEAEKKRSSKKEASM) the composition is skewed to basic and acidic residues. 5 cysteine pairs are disulfide-bonded: C93-C108, C100-C114, C107-C125, C111-C132, and C116-C123. The region spanning 93-132 (CVATRDSCKPPAPACCDPCASCQCRFFRSACSCRVLSLNC) is the Agouti domain.

It localises to the secreted. Functionally, involved in the regulation of melanogenesis. The binding of ASP to MC1R precludes alpha-MSH initiated signaling and thus blocks production of cAMP, leading to a down-regulation of eumelanogenesis (brown/black pigment) and thus increasing synthesis of pheomelanin (yellow/red pigment). In Macaca nigrescens (Gorontalo macaque), this protein is Agouti-signaling protein (ASIP).